A 483-amino-acid polypeptide reads, in one-letter code: MHQMTLAEIARGLAEKKFSSEELTRVLLSRIATLDPQLNSFISLTEDLAITQAQAADARRAAGENGPLLGAPLAHKDLFCTQGIRTSCGSRMLDNFKAPYDATVVSKLASAGTVTLGKTNMDEFAMGSANESSHYGAVKNPWNLQCVPGGSSGGSAAAVAARLLPAATGTDTGGSIRQPAALTNLTGLKPTYGRVSRWGMIAYASSLDQAGPMARTAEDCALLLQGMAGFDPQDSTSIDEPVPDYSASLNTSLKGLRIGVPKEYFSAGLDPRIAQLVHESVKELEKLGAVVKEVSLPNLQHAIPAYYVIAPAEASSNLSRFDGVRFGYRCEDPKDLTDLYKRSRAEGFGPEVQRRIMVGAYALSAGYYDAYYLQAQKIRRLIKNDFMSAFAEVDVILGPTTPNPAWKIGAKTNDPIAEYLEDFYTITANLAGLPGLSMPAGFVDGLPVGVQLLAPYFQEGRLLNVAHQYQQVTDWHTRAPEGF.

Catalysis depends on charge relay system residues K76 and S151. S175 (acyl-ester intermediate) is an active-site residue.

It belongs to the amidase family. GatA subfamily. As to quaternary structure, heterotrimer of A, B and C subunits.

The catalysed reaction is L-glutamyl-tRNA(Gln) + L-glutamine + ATP + H2O = L-glutaminyl-tRNA(Gln) + L-glutamate + ADP + phosphate + H(+). Allows the formation of correctly charged Gln-tRNA(Gln) through the transamidation of misacylated Glu-tRNA(Gln) in organisms which lack glutaminyl-tRNA synthetase. The reaction takes place in the presence of glutamine and ATP through an activated gamma-phospho-Glu-tRNA(Gln). The polypeptide is Glutamyl-tRNA(Gln) amidotransferase subunit A (Pseudomonas savastanoi pv. phaseolicola (strain 1448A / Race 6) (Pseudomonas syringae pv. phaseolicola (strain 1448A / Race 6))).